Here is a 306-residue protein sequence, read N- to C-terminus: Tyrosine recombinase EUBREC_2677 (306 aa).

The region spanning 2–84 is the Core-binding (CB) domain; it reads NNLQTHISSY…SIKAFFHYLE (83 aa). Residues 106 to 296 enclose the Tyr recombinase domain; sequence ILPKTIPLYI…AVSKQKDILI (191 aa). Residues R155, K179, H248, R251, and H274 contribute to the active site. Residue Y283 is the O-(3'-phospho-DNA)-tyrosine intermediate of the active site.

It belongs to the 'phage' integrase family.

Its subcellular location is the cytoplasm. Its function is as follows. Site-specific tyrosine recombinase, which acts by catalyzing the cutting and rejoining of the recombining DNA molecules. The protein is Tyrosine recombinase EUBREC_2677 of Agathobacter rectalis (strain ATCC 33656 / DSM 3377 / JCM 17463 / KCTC 5835 / VPI 0990) (Eubacterium rectale).